Consider the following 449-residue polypeptide: Glucose-6-phosphate isomerase (449 aa).

The Proton donor role is filled by glutamate 291. Catalysis depends on residues histidine 312 and lysine 426.

Belongs to the GPI family.

It localises to the cytoplasm. It carries out the reaction alpha-D-glucose 6-phosphate = beta-D-fructose 6-phosphate. It functions in the pathway carbohydrate biosynthesis; gluconeogenesis. Its pathway is carbohydrate degradation; glycolysis; D-glyceraldehyde 3-phosphate and glycerone phosphate from D-glucose: step 2/4. Functionally, catalyzes the reversible isomerization of glucose-6-phosphate to fructose-6-phosphate. The sequence is that of Glucose-6-phosphate isomerase from Clostridium botulinum (strain Alaska E43 / Type E3).